The chain runs to 510 residues: E3 ubiquitin-protein ligase TRIM7 (510 aa).

Residues 29 to 81 (CSICLEFFREPVSVECGHSFCRACIMRCWERPGAGTGTATRTLPCPLPCPQCR) form an RING-type zinc finger. S106 bears the Phosphoserine; by RPS6KA5 mark. Residues 124 to 165 (AAAARCSQHGEQLKLYCQDDGRAICVVCDRAREHRSHAVLPL) form a B box-type zinc finger. Positions 129, 132, 151, and 157 each coordinate Zn(2+). Positions 165-275 (LEEAVQEAKE…SGQIQETAQK (111 aa)) form a coiled coil. Residues 323 to 510 (LLKKFKEDLQ…STGTYLRIWP (188 aa)) enclose the B30.2/SPRY domain.

Belongs to the TRIM/RBCC family. In terms of assembly, forms homodimers. Interacts with GNIP2. Interacts with GYG1. Interacts with RNF187 (via C-terminus). Phosphorylated at Ser-106 by RPS6KA5/MSK1, which stimulates the ubiquitin ligase activity. In terms of processing, auto-ubiquitinates via 'Lys-63'-linked polyubiquitination. Highly expressed in antigen-presenting cells.

The protein resides in the nucleus. The protein localises to the cytoplasm. It localises to the golgi apparatus. The enzyme catalyses S-ubiquitinyl-[E2 ubiquitin-conjugating enzyme]-L-cysteine + [acceptor protein]-L-lysine = [E2 ubiquitin-conjugating enzyme]-L-cysteine + N(6)-ubiquitinyl-[acceptor protein]-L-lysine.. It participates in protein modification; protein ubiquitination. In terms of biological role, E3 ubiquitin-protein ligase that have both tumor-promoting and tumor-suppressing activities and functions in several biological processes including innate immunity, regulation of ferroptosis as well as cell proliferation and migration. Acts as an antiviral effector against multiple viruses by targeting specific viral proteins for ubiquitination and degradation including norovirus NTPase protein. Mechanistically, recognizes the C-terminal glutamine-containing motif generated by viral proteases that process the polyproteins and trigger their ubiquitination and subsequent degradation. Mediates 'Lys-63'-linked polyubiquitination and stabilization of the JUN coactivator RNF187 in response to growth factor signaling via the MEK/ERK pathway, thereby regulating JUN transactivation and cellular proliferation. Promotes the TLR4-mediated signaling activation through its E3 ligase domain leading to production of pro-inflammatory cytokines and type I interferon. Also plays a negative role in the regulation of exogenous cytosolic DNA virus-triggered immune response. Mechanistically, enhances the 'Lys-48'-linked ubiquitination of STING1 leading to its proteasome-dependent degradation. Mediates the ubiquitination of the SIN3-HDAC chromatin remodeling complex component BRMS1. Modulates NCOA4-mediated ferritinophagy and ferroptosis in glioblastoma cells by ubiquitinating NCOA4, leading to its degradation. The protein is E3 ubiquitin-protein ligase TRIM7 (Trim7) of Mus musculus (Mouse).